Consider the following 587-residue polypeptide: Mitogen-activated protein kinase 4 (587 aa).

The Protein kinase domain occupies 20–312 (FVDFQPLGFG…AEMGLQHPYM (293 aa)). ATP-binding positions include 26–34 (LGFGVNGLV) and Lys49. Asp149 functions as the Proton acceptor in the catalytic mechanism. A Phosphoserine; by PAK1, PAK2 and PAK3 modification is found at Ser186. An SEG motif motif is present at residues 186–188 (SEG). The FRIEDE motif motif lies at 328-333 (FRIEDE). Composition is skewed to basic and acidic residues over residues 373–383 (QDASEVQRDPR) and 395–413 (VDPRKDSHSSSERFLEQSH). Positions 373–413 (QDASEVQRDPRAGSAPLAEDVQVDPRKDSHSSSERFLEQSH) are disordered. Position 434 is a phosphoserine (Ser434). A disordered region spans residues 499 to 534 (STQGGPEHASPPADDPERRLSASPPGRPAPVDGGAS).

The protein belongs to the protein kinase superfamily. CMGC Ser/Thr protein kinase family. MAP kinase subfamily. As to quaternary structure, homodimer. Heterodimer with ERK3/MAPK6. Interacts with (via FRIEDE motif) MAPKAPK5. Mg(2+) serves as cofactor. Phosphorylated at Ser-186 by PAK1, PAK2 and PAK3 resulting in catalytic activation. Phosphorylated by MAPKAPK5 at other sites. As to expression, high expression in heart and brain.

Its subcellular location is the cytoplasm. The protein resides in the nucleus. The catalysed reaction is L-seryl-[protein] + ATP = O-phospho-L-seryl-[protein] + ADP + H(+). It catalyses the reaction L-threonyl-[protein] + ATP = O-phospho-L-threonyl-[protein] + ADP + H(+). Its activity is regulated as follows. Activated by phosphorylation at Ser-186. Its function is as follows. Atypical MAPK protein. Phosphorylates microtubule-associated protein 2 (MAP2) and MAPKAPK5. The precise role of the complex formed with MAPKAPK5 is still unclear, but the complex follows a complex set of phosphorylation events: upon interaction with atypical MAPKAPK5, ERK4/MAPK4 is phosphorylated at Ser-186 and then mediates phosphorylation and activation of MAPKAPK5, which in turn phosphorylates ERK4/MAPK4. May promote entry in the cell cycle. In Homo sapiens (Human), this protein is Mitogen-activated protein kinase 4 (MAPK4).